A 168-amino-acid polypeptide reads, in one-letter code: MGKCQAVFLLVGALCVLSLAGVANAAENHFKVQGMVYCDTCRIQFMTRVSTIMEGATVKLECRNITAGTQTFKAEAVTDKVGQYSIPVHGDFQDDICEIELVKSPNSECSEVSHDVYAKQSAKVSLTSNNGEASDIRSANALGFMRKEPLKECPEVLKELDLYDVKAN.

The N-terminal stretch at 1 to 26 (MGKCQAVFLLVGALCVLSLAGVANAA) is a signal peptide. Intrachain disulfides connect Cys-38–Cys-109, Cys-41–Cys-153, and Cys-62–Cys-97. N-linked (GlcNAc...) asparagine glycosylation occurs at Asn-64.

This sequence belongs to the Ole e I family. Expressed in pollen.

The protein resides in the secreted. The chain is Pollen allergen Cro s 1 from Crocus sativus (Saffron).